Reading from the N-terminus, the 246-residue chain is 5-oxoprolinase subunit A (246 aa).

The protein belongs to the LamB/PxpA family. As to quaternary structure, forms a complex composed of PxpA, PxpB and PxpC.

The enzyme catalyses 5-oxo-L-proline + ATP + 2 H2O = L-glutamate + ADP + phosphate + H(+). Catalyzes the cleavage of 5-oxoproline to form L-glutamate coupled to the hydrolysis of ATP to ADP and inorganic phosphate. This Cupriavidus pinatubonensis (strain JMP 134 / LMG 1197) (Cupriavidus necator (strain JMP 134)) protein is 5-oxoprolinase subunit A.